A 131-amino-acid polypeptide reads, in one-letter code: uncharacterized protein (131 aa).

The protein localises to the plastid. It localises to the chloroplast. This is an uncharacterized protein from Chlorella vulgaris (Green alga).